A 230-amino-acid chain; its full sequence is Cytochrome b6-f complex iron-sulfur subunit, chloroplastic (230 aa).

The transit peptide at 1–51 directs the protein to the chloroplast; the sequence is MASFTLSSATPSQLCSSKNGMFAPSLALAKAGRVNVLISKERIRGMKLTCQ. A helical transmembrane segment spans residues 73-93; that stretch reads LLGALSLPTGYMLLPYASFFV. Residues 116–212 enclose the Rieske domain; sequence AAEWLKTHAP…CDVDDGKVVF (97 aa). [2Fe-2S] cluster is bound by residues cysteine 158, histidine 160, cysteine 176, and histidine 179. The cysteines at positions 163 and 178 are disulfide-linked.

This sequence belongs to the Rieske iron-sulfur protein family. As to quaternary structure, the 4 large subunits of the cytochrome b6-f complex are cytochrome b6, subunit IV (17 kDa polypeptide, petD), cytochrome f and the Rieske protein, while the 4 small subunits are petG, petL, petM and petN. The complex functions as a dimer. The cofactor is [2Fe-2S] cluster.

It is found in the plastid. The protein resides in the chloroplast thylakoid membrane. The enzyme catalyses 2 oxidized [plastocyanin] + a plastoquinol + 2 H(+)(in) = 2 reduced [plastocyanin] + a plastoquinone + 4 H(+)(out). In terms of biological role, component of the cytochrome b6-f complex, which mediates electron transfer between photosystem II (PSII) and photosystem I (PSI), cyclic electron flow around PSI, and state transitions. This Spinacia oleracea (Spinach) protein is Cytochrome b6-f complex iron-sulfur subunit, chloroplastic (petC).